A 78-amino-acid polypeptide reads, in one-letter code: UPF0248 protein Msed_0897 (78 aa).

It belongs to the UPF0248 family.

This Metallosphaera sedula (strain ATCC 51363 / DSM 5348 / JCM 9185 / NBRC 15509 / TH2) protein is UPF0248 protein Msed_0897.